The primary structure comprises 146 residues: Protein disulfide-isomerase 5-1 (146 aa).

A signal peptide spans Met1 to Ala25. A Thioredoxin domain is found at Glu26–Glu133. Residues Cys55 and Cys58 each act as nucleophile in the active site. A disulfide bond links Cys55 and Cys58.

It belongs to the protein disulfide isomerase family.

Acts as a protein-folding catalyst that interacts with nascent polypeptides to catalyze the formation, isomerization, and reduction or oxidation of disulfide bonds. The sequence is that of Protein disulfide-isomerase 5-1 (PDIL5-1) from Arabidopsis thaliana (Mouse-ear cress).